The sequence spans 696 residues: MNKIRKTFQYGKHEVTFETGEMARQATGAVVVRMGDTVLLVSVVAKKEAEEGRDFFPLTINYQEKTYAAGKIPGGYFKREGRPTEKETLTSRLIDRPLRPLFPKGFTNEVQVIATVLSVDSKVPTDIPAILGASAAIGLSGIPFNGSLGAARVGYRGGEYLLNPSLDELKDSALDLVVAGTRDAVLMVESEAQELPESVMLGAVLHGHQAMQVAIQAIAEFIQEAGGAKWEWEPPTVNTALEKWVVEKSEAPLKKAYQIQEKTARQAQIQAIRDQLLADRAAEREGEENAVNEHELAVIFHELERRIVREQILTGQPRIDGRDSKTVRPITVKVGVLPRSHGSALFTRGETQALVVTTLGTERDAQSIDDLDGDRQEEFIFHYNFPPFCVGEVGFMSGPKRREIGHGRLAKRAVVPVVPTLDKFPYVIRVVSEILESNGSSSMASVCGSSLALMDAGVPTKAPVAGIAMGLIKENDKYAVLSDILGDEDHLGDMDFKVAGTSNGVTALQMDIKIEGITKEIMEQALDQAKEGRLHILSIMNKVLDKPRSQVSDLAPQYVTMKINPEKIRDVIGKGGVVIREITEATNCAIDISDDGTIKIAAHTTEEGEAAKRRIEELTAEVELGKVYEGTVVKITDFGAFVQILPNTQGLVHISQIAQERVENVRDYLEEGQVIRVKVIEIDRQGRVRLSMKQID.

Residues Asp489 and Asp495 each coordinate Mg(2+). The KH domain maps to 556 to 615 (PQYVTMKINPEKIRDVIGKGGVVIREITEATNCAIDISDDGTIKIAAHTTEEGEAAKRRI). The S1 motif domain occupies 625–693 (GKVYEGTVVK…RQGRVRLSMK (69 aa)).

It belongs to the polyribonucleotide nucleotidyltransferase family. In terms of assembly, component of the RNA degradosome, which is a multiprotein complex involved in RNA processing and mRNA degradation. Mg(2+) serves as cofactor.

It localises to the cytoplasm. The catalysed reaction is RNA(n+1) + phosphate = RNA(n) + a ribonucleoside 5'-diphosphate. Functionally, involved in mRNA degradation. Catalyzes the phosphorolysis of single-stranded polyribonucleotides processively in the 3'- to 5'-direction. The chain is Polyribonucleotide nucleotidyltransferase from Coxiella burnetii (strain CbuG_Q212) (Coxiella burnetii (strain Q212)).